Consider the following 540-residue polypeptide: Chaperonin GroEL 3 (540 aa).

ATP contacts are provided by residues 30-33 (TLGP), Lys-51, 87-91 (DGTTT), Gly-415, 479-481 (NAA), and Asp-495.

The protein belongs to the chaperonin (HSP60) family. In terms of assembly, forms a cylinder of 14 subunits composed of two heptameric rings stacked back-to-back. Interacts with the co-chaperonin GroES.

Its subcellular location is the cytoplasm. It catalyses the reaction ATP + H2O + a folded polypeptide = ADP + phosphate + an unfolded polypeptide.. Functionally, together with its co-chaperonin GroES, plays an essential role in assisting protein folding. The GroEL-GroES system forms a nano-cage that allows encapsulation of the non-native substrate proteins and provides a physical environment optimized to promote and accelerate protein folding. The chain is Chaperonin GroEL 3 from Burkholderia ambifaria (strain ATCC BAA-244 / DSM 16087 / CCUG 44356 / LMG 19182 / AMMD) (Burkholderia cepacia (strain AMMD)).